The following is a 305-amino-acid chain: tRNA pseudouridine synthase B (305 aa).

The active-site Nucleophile is Asp-39.

The protein belongs to the pseudouridine synthase TruB family. Type 1 subfamily.

It catalyses the reaction uridine(55) in tRNA = pseudouridine(55) in tRNA. Its function is as follows. Responsible for synthesis of pseudouridine from uracil-55 in the psi GC loop of transfer RNAs. The chain is tRNA pseudouridine synthase B from Staphylococcus aureus (strain MRSA252).